The following is a 410-amino-acid chain: UPF0761 membrane protein Csal_1895 (410 aa).

6 helical membrane passes run 43-63, 99-119, 139-159, 180-200, 212-232, and 247-267; these read LFAVVPFMTVLYAMLSAIPSF, SLTLIGLMFLLVTAVMMMVTV, FLLYWAVLTLGPLLLGSGFLL, VAFLRLLPLTLSFTAFVFIYM, AVAGAGLAALALELAKGAFSL, and FAAVPLFLVWVFLSWAIVLVG.

The protein belongs to the UPF0761 family.

It localises to the cell inner membrane. The sequence is that of UPF0761 membrane protein Csal_1895 from Chromohalobacter salexigens (strain ATCC BAA-138 / DSM 3043 / CIP 106854 / NCIMB 13768 / 1H11).